The chain runs to 199 residues: Putative 3-methyladenine DNA glycosylase (199 aa).

Belongs to the DNA glycosylase MPG family.

This chain is Putative 3-methyladenine DNA glycosylase, found in Chlorobium phaeobacteroides (strain BS1).